The sequence spans 460 residues: Cysteine--tRNA ligase (460 aa).

A Zn(2+)-binding site is contributed by Cys28. A 'HIGH' region motif is present at residues 30 to 40; sequence VTIYDLCHIGH. Zn(2+) contacts are provided by Cys209, His234, and Glu238. The short motif at 266–270 is the 'KMSKS' region element; that stretch reads KMSKS. An ATP-binding site is contributed by Lys269.

This sequence belongs to the class-I aminoacyl-tRNA synthetase family. In terms of assembly, monomer. Requires Zn(2+) as cofactor.

It is found in the cytoplasm. It catalyses the reaction tRNA(Cys) + L-cysteine + ATP = L-cysteinyl-tRNA(Cys) + AMP + diphosphate. This chain is Cysteine--tRNA ligase, found in Shewanella frigidimarina (strain NCIMB 400).